A 308-amino-acid chain; its full sequence is tRNA dimethylallyltransferase (308 aa).

Residue 14–21 (GPTASGKT) participates in ATP binding. 16–21 (TASGKT) contacts substrate. 3 interaction with substrate tRNA regions span residues 39–42 (DSAL), 163–167 (QRLAR), and 244–249 (RCVGYR).

Belongs to the IPP transferase family. As to quaternary structure, monomer. The cofactor is Mg(2+).

It catalyses the reaction adenosine(37) in tRNA + dimethylallyl diphosphate = N(6)-dimethylallyladenosine(37) in tRNA + diphosphate. Catalyzes the transfer of a dimethylallyl group onto the adenine at position 37 in tRNAs that read codons beginning with uridine, leading to the formation of N6-(dimethylallyl)adenosine (i(6)A). The chain is tRNA dimethylallyltransferase from Shewanella halifaxensis (strain HAW-EB4).